The sequence spans 539 residues: Eukaryotic translation initiation factor 3 subunit L (539 aa).

Residues 306–514 (TFSDILLYIQ…IHIADTKVSH (209 aa)) form the PCI domain.

It belongs to the eIF-3 subunit L family. Component of the eukaryotic translation initiation factor 3 (eIF-3) complex. The eIF-3 complex interacts with pix.

The protein resides in the cytoplasm. Component of the eukaryotic translation initiation factor 3 (eIF-3) complex, which is involved in protein synthesis of a specialized repertoire of mRNAs and, together with other initiation factors, stimulates binding of mRNA and methionyl-tRNAi to the 40S ribosome. The eIF-3 complex specifically targets and initiates translation of a subset of mRNAs involved in cell proliferation. The polypeptide is Eukaryotic translation initiation factor 3 subunit L (Drosophila melanogaster (Fruit fly)).